A 263-amino-acid polypeptide reads, in one-letter code: Uroporphyrinogen-III C-methyltransferase (263 aa).

S-adenosyl-L-homocysteine-binding positions include proline 20, 96–98 (GGD), 126–127 (TA), methionine 180, and alanine 237.

Belongs to the precorrin methyltransferase family.

The catalysed reaction is uroporphyrinogen III + 2 S-adenosyl-L-methionine = precorrin-2 + 2 S-adenosyl-L-homocysteine + H(+). The protein operates within cofactor biosynthesis; adenosylcobalamin biosynthesis; precorrin-2 from uroporphyrinogen III: step 1/1. It functions in the pathway porphyrin-containing compound metabolism; siroheme biosynthesis; precorrin-2 from uroporphyrinogen III: step 1/1. Its function is as follows. Catalyzes the two successive C-2 and C-7 methylation reactions involved in the conversion of uroporphyrinogen III to precorrin-2 via the intermediate formation of precorrin-1. It is a step in the biosynthesis of both cobalamin (vitamin B12) and siroheme. The sequence is that of Uroporphyrinogen-III C-methyltransferase (cobA) from Synechocystis sp. (strain ATCC 27184 / PCC 6803 / Kazusa).